Reading from the N-terminus, the 334-residue chain is HTH-type transcriptional repressor PurR (334 aa).

An HTH lacI-type domain is found at 2 to 56 (ATIKDVAKMAGVSTTTVSHVINKTRFVAAETEKLVLQAIQELNYSPSAVARSLKV). The H-T-H motif DNA-binding region spans 4-23 (IKDVAKMAGVSTTTVSHVIN). A DNA-binding region spans residues 48–56 (SAVARSLKV). Hypoxanthine is bound by residues Tyr73, Lys189, Thr191, Phe220, and Asp274.

As to quaternary structure, homodimer.

Its pathway is purine metabolism; purine nucleotide biosynthesis [regulation]. Functionally, is the main repressor of the genes involved in the de novo synthesis of purine nucleotides, regulating purB, purC, purEK, purF, purHD, purL, purMN and guaBA expression. PurR is allosterically activated to bind its cognate DNA by binding the purine corepressors, hypoxanthine or guanine, thereby effecting transcription repression. In Pasteurella multocida (strain Pm70), this protein is HTH-type transcriptional repressor PurR.